Reading from the N-terminus, the 164-residue chain is uncharacterized protein (164 aa).

This is an uncharacterized protein from Escherichia coli (strain K12).